A 585-amino-acid polypeptide reads, in one-letter code: Rhizobactin siderophore biosynthesis protein RhbC (585 aa).

The protein belongs to the IucA/IucC family.

Its pathway is siderophore biosynthesis; rhizobactin biosynthesis. This chain is Rhizobactin siderophore biosynthesis protein RhbC (rhbC), found in Rhizobium meliloti (strain 1021) (Ensifer meliloti).